The chain runs to 623 residues: MAU2 chromatid cohesion factor homolog (623 aa).

3 TPR repeats span residues 96 to 129 (FDTA…SQNN), 451 to 484 (GGFY…ANAE), and 491 to 524 (SCSL…ASKI).

This sequence belongs to the SCC4/mau-2 family. As to quaternary structure, interacts with Nipped-B to form the cohesin loading complex.

Its subcellular location is the nucleus. It localises to the nucleoplasm. Required for association of the cohesin complex with chromatin during interphase. Plays a role in sister chromatid cohesion and normal progression through prometaphase. In Drosophila grimshawi (Hawaiian fruit fly), this protein is MAU2 chromatid cohesion factor homolog.